The following is a 158-amino-acid chain: 2-C-methyl-D-erythritol 2,4-cyclodiphosphate synthase (158 aa).

A divalent metal cation-binding residues include Asp9 and His11. 4-CDP-2-C-methyl-D-erythritol 2-phosphate is bound by residues 9-11 (DVH) and 35-36 (HS). Residue His43 coordinates a divalent metal cation. Residues 57-59 (DIG), 62-66 (FPDTD), 101-107 (AQKPKML), 133-136 (TTTE), Phe140, and Arg143 each bind 4-CDP-2-C-methyl-D-erythritol 2-phosphate.

The protein belongs to the IspF family. In terms of assembly, homotrimer. The cofactor is a divalent metal cation.

It carries out the reaction 4-CDP-2-C-methyl-D-erythritol 2-phosphate = 2-C-methyl-D-erythritol 2,4-cyclic diphosphate + CMP. It functions in the pathway isoprenoid biosynthesis; isopentenyl diphosphate biosynthesis via DXP pathway; isopentenyl diphosphate from 1-deoxy-D-xylulose 5-phosphate: step 4/6. Functionally, involved in the biosynthesis of isopentenyl diphosphate (IPP) and dimethylallyl diphosphate (DMAPP), two major building blocks of isoprenoid compounds. Catalyzes the conversion of 4-diphosphocytidyl-2-C-methyl-D-erythritol 2-phosphate (CDP-ME2P) to 2-C-methyl-D-erythritol 2,4-cyclodiphosphate (ME-CPP) with a corresponding release of cytidine 5-monophosphate (CMP). This is 2-C-methyl-D-erythritol 2,4-cyclodiphosphate synthase from Bacillus subtilis (strain 168).